Consider the following 673-residue polypeptide: Pesticin receptor (673 aa).

The N-terminal stretch at 1–22 (MKMTRLYPLALGGLLLPAIANA) is a signal peptide. A TonB box motif is present at residues 30–37 (STLVVTAS). One can recognise a TBDR plug domain in the interval 41-155 (SRSASANNVS…QGGIINIVTQ (115 aa)). Residues 160–672 (TPRGYIEGGV…TVGINTRIDF (513 aa)) form the TBDR beta-barrel domain. Positions 657-673 (QVNMGRTVGINTRIDFF) match the TonB C-terminal box motif.

This sequence belongs to the TonB-dependent receptor family.

It is found in the cell outer membrane. Functionally, receptor for the bacteriocin pesticin and for the siderophore yersiniabactin. This chain is Pesticin receptor (fyuA), found in Yersinia pestis.